Consider the following 678-residue polypeptide: MLLALLLTMLLYASLQAQENSFTINSIHMESRPSWEVSNGQKLTLQCLVDISTTSKSRPQHQVLFYKDDALVYNVSSSEHTESFVIPQSRVFHAGKYKCTVILNSKEKTTIEYQLTVNGVPMPEVTVDKKEVTEGGIVTVNCSMQEEKPPIYFKIEKVELGTKNVKLSREKTSNMNFVLIEFPIEEQDHLLVFRCQAGVLSGIKMQTSEFIRSEYVTVQEFFSTPKFQIQPPEMIIEGNQLHIKCSVQVAHLAQEFPEIIIQKDKAIVATSKQSKEAVYSVMALVEHSGHYTCKVESNRISKASSILVNITELFPRPKLELSSSRLDQGEMLDLSCSVSGAPVANFTIQKEETVLSQYQNFSKIAEERDSGLYSCTAGIGKVVKRSNLVPVQVCEMLSKPRIFHDAKFEIIKGQIIGISCQSVNGTAPITYRLLRAKSNFQTVQKNSNDPVTFTDKPTRDMEYQCIVDNCHSHPEVRSEILRVKVIAPVDEVTISILSGNDVQSGDEMVLRCSVKEGTGPVTFQFYKEKEGRPFHEETVNDTQVFWHHEQTSKEQEGQYYCTAFNRASIVTSLRSGPLTVRVFLAPWKKGLIAVVVIGVVIAALIVAAKYYFLRKAKAKQKPVEMSRPAVPLLNSNSEKVSEPSVETNSHYDSQNMDVEYTEVEVSSLEPHQENGRLP.

The N-terminal stretch at 1 to 17 (MLLALLLTMLLYASLQA) is a signal peptide. At 18 to 589 (QENSFTINSI…VRVFLAPWKK (572 aa)) the chain is on the extracellular side. Ig-like C2-type domains lie at 40-126 (GQKL…PEVT), 135-213 (GGIV…FIRS), 225-309 (PKFQ…ILVN), 315-391 (PRPK…LVPV), 413-472 (GQII…NCHS), and 488-577 (PVDE…RSGP). Cys47 and Cys99 form a disulfide bridge. 2 N-linked (GlcNAc...) asparagine glycosylation sites follow: Asn74 and Asn141. Intrachain disulfides connect Cys142–Cys195 and Cys245–Cys293. Residues Asn309, Asn345, Asn360, Asn424, and Asn540 are each glycosylated (N-linked (GlcNAc...) asparagine). 3 disulfide bridges follow: Cys336–Cys375, Cys420–Cys465, and Cys512–Cys561. A helical membrane pass occupies residues 590-610 (GLIAVVVIGVVIAALIVAAKY). Topologically, residues 611 to 678 (YFLRKAKAKQ…EPHQENGRLP (68 aa)) are cytoplasmic. Residues 634–653 (NSNSEKVSEPSVETNSHYDS) are disordered. The ITIM motif signature appears at 658–663 (VEYTEV). At Tyr660 the chain carries Phosphotyrosine; by FER.

Trans-homodimer (via Ig-like C2-type 1 and Ig-like C2-type 2 domains); trans-homodimerization is required for cell-cell interaction. Forms a complex with BDKRB2 and GNAQ. Interacts with BDKRB2 and GNAQ. Interacts with PTPN11. Interacts with FER. Interacts with CD177; the interaction is Ca(2+)-dependent; the interaction is direct. Phosphorylated on Ser and Tyr residues after cellular activation. In endothelial cells Fyn mediates mechanical-force (stretch or pull) induced tyrosine phosphorylation. Phosphorylated on tyrosine residues by FER and FES in response to FCER1 activation. In terms of processing, palmitoylation by ZDHHC21 is necessary for cell surface expression in endothelial cells and enrichment in membrane rafts.

Its subcellular location is the cell membrane. It localises to the membrane raft. It is found in the cell junction. Its function is as follows. Cell adhesion molecule which is required for leukocyte transendothelial migration (TEM) under most inflammatory conditions. Tyr-660 plays a critical role in TEM and is required for efficient trafficking of PECAM1 to and from the lateral border recycling compartment (LBRC) and is also essential for the LBRC membrane to be targeted around migrating leukocytes. Trans-homophilic interaction may play a role in endothelial cell-cell adhesion via cell junctions. Heterophilic interaction with CD177 plays a role in transendothelial migration of neutrophils. Homophilic ligation of PECAM1 prevents macrophage-mediated phagocytosis of neighboring viable leukocytes by transmitting a detachment signal. Promotes macrophage-mediated phagocytosis of apoptotic leukocytes by tethering them to the phagocytic cells; PECAM1-mediated detachment signal appears to be disabled in apoptotic leukocytes. Modulates bradykinin receptor BDKRB2 activation. Regulates bradykinin- and hyperosmotic shock-induced ERK1/2 activation in endothelial cells. Induces susceptibility to atherosclerosis. This chain is Platelet endothelial cell adhesion molecule (Pecam1), found in Rattus norvegicus (Rat).